The chain runs to 512 residues: GMP synthase [glutamine-hydrolyzing] (512 aa).

One can recognise a Glutamine amidotransferase type-1 domain in the interval 6-195 (KIIILDFGSQ…VFNICGCQPK (190 aa)). Cysteine 83 (nucleophile) is an active-site residue. Active-site residues include histidine 169 and glutamate 171. The GMPS ATP-PPase domain maps to 196-387 (WKITEFISAA…LGIDFKFVYK (192 aa)). 223-229 (SGGVDSS) is a binding site for ATP.

Homodimer.

It catalyses the reaction XMP + L-glutamine + ATP + H2O = GMP + L-glutamate + AMP + diphosphate + 2 H(+). It functions in the pathway purine metabolism; GMP biosynthesis; GMP from XMP (L-Gln route): step 1/1. Functionally, catalyzes the synthesis of GMP from XMP. This chain is GMP synthase [glutamine-hydrolyzing], found in Spiroplasma kunkelii.